A 428-amino-acid polypeptide reads, in one-letter code: Adenylosuccinate synthetase (428 aa).

GTP contacts are provided by residues 12 to 18 (GDEGKGK) and 40 to 42 (GHT). Aspartate 13 serves as the catalytic Proton acceptor. Mg(2+)-binding residues include aspartate 13 and glycine 40. IMP-binding positions include 13–16 (DEGK), 38–41 (NAGH), threonine 128, arginine 142, glutamine 223, threonine 238, and arginine 302. Catalysis depends on histidine 41, which acts as the Proton donor. 298–304 (TTTGRPR) is a binding site for substrate. Residues arginine 304, 330 to 332 (SID), and 412 to 414 (SVG) contribute to the GTP site.

The protein belongs to the adenylosuccinate synthetase family. As to quaternary structure, homodimer. Requires Mg(2+) as cofactor.

It localises to the cytoplasm. It carries out the reaction IMP + L-aspartate + GTP = N(6)-(1,2-dicarboxyethyl)-AMP + GDP + phosphate + 2 H(+). It functions in the pathway purine metabolism; AMP biosynthesis via de novo pathway; AMP from IMP: step 1/2. Functionally, plays an important role in the de novo pathway of purine nucleotide biosynthesis. Catalyzes the first committed step in the biosynthesis of AMP from IMP. This is Adenylosuccinate synthetase from Shouchella clausii (strain KSM-K16) (Alkalihalobacillus clausii).